Reading from the N-terminus, the 504-residue chain is Anaerobic nitric oxide reductase transcription regulator NorR (504 aa).

Asp57 is modified (4-aspartylphosphate). Residues 187-416 form the Sigma-54 factor interaction domain; sequence MIGLSPGMTQ…LEHAIHRAVV (230 aa). Residues 215–222 and 278–287 each bind ATP; these read GETGTGKE and ADNGTLFLDE. Residues 479–498 constitute a DNA-binding region (H-T-H motif); that stretch reads WAACARMLETDVANLHRLAK.

It functions in the pathway nitrogen metabolism; nitric oxide reduction. Functionally, required for the expression of anaerobic nitric oxide (NO) reductase, acts as a transcriptional activator for at least the norVW operon. Activation also requires sigma-54. This is Anaerobic nitric oxide reductase transcription regulator NorR from Escherichia coli (strain ATCC 8739 / DSM 1576 / NBRC 3972 / NCIMB 8545 / WDCM 00012 / Crooks).